We begin with the raw amino-acid sequence, 314 residues long: Methionyl-tRNA formyltransferase (314 aa).

111–114 (SLLP) lines the (6S)-5,6,7,8-tetrahydrofolate pocket.

The protein belongs to the Fmt family.

The catalysed reaction is L-methionyl-tRNA(fMet) + (6R)-10-formyltetrahydrofolate = N-formyl-L-methionyl-tRNA(fMet) + (6S)-5,6,7,8-tetrahydrofolate + H(+). Attaches a formyl group to the free amino group of methionyl-tRNA(fMet). The formyl group appears to play a dual role in the initiator identity of N-formylmethionyl-tRNA by promoting its recognition by IF2 and preventing the misappropriation of this tRNA by the elongation apparatus. This is Methionyl-tRNA formyltransferase from Chlorobium luteolum (strain DSM 273 / BCRC 81028 / 2530) (Pelodictyon luteolum).